Here is a 953-residue protein sequence, read N- to C-terminus: MTAAENVCYTLINVPMDSEPPSEISLKNDLEKGDVKLKTEALKKVIIMILNGEKLPGLLMTIIRFVLPLQDHTIKKLLLVFWEIVPKTTPDGRLLQEMILVCDAYRKDLQHPNEFIRGSTLRFLCKLKEAELLEPLMPAIRACLEHRHSYVRRNAVLAIYTIYRNFEHLIPDAPELIHDFLVNEKDASCKRNAFMMLIHADQDRALDYLSTCIDQVQTFGDILQLVIVELIYKVCHANPSERARFIRCIYNLLQSSSPAVKYEAAGTLVTLSSAPTAIKAAAQCYIDLIIKESDNNVKLIVLDRLVELKEHPSHERVLQDLVMDILRVLSTPDLEVRKKTLQLALDLVSSRNVEELVIVLKKEVIKTNNVTEHEDTDKYRQLLVRTLHSCSVRFPDMAANVIPVLMEFLSDNNEAAAADVLEFVREAIQRFDNLRPLIVEKMLEVFHAIKSVKIYRGALWILGEYCSTKEDIQSVMTEVRRSLGEIPIVESEIKKEAGELKPEEEVTVGPVQKLVTEMGTYATQSALSSSRPTKKEEDRPPLRGFLLDGDFFVAASLATTLTKIALRYVSLVQEKKKQNSFIAEAMLLMATILHLGKSSLPKKPITDDDVDRISLCLKVLSECSPLMNDIFNKECRQSLSHMLSAKLEEEKLSQKKESEKRNVTVQPDDPISFMQLTAKNEMSSKEDQFQLSLLAAMGNTQRKEAADPLASKLNKVTQLTGFSDPVYAEAYVHVNQYDIVLDVLVVNQTSDTLQNCTLELATLGDLKLVEKPSPLTLAPHDFANIKANVKVASTENGIIFGNIVYDVSGAASDRNCVVLSDIHIDIMDYIQPASCTDAEFRQMWAEFEWENKVTVNTNIIDLNEYLQHILKSTNMKCLTPEKALSGYCGFMAANLYARSIFGEDALANVSIEKPIHLGPEAPVTGHIRIRAKSQGMALSLGDKINLSQKKTSL.

HEAT repeat units lie at residues Asp-17 to Lys-54, Gln-96 to Glu-131, Leu-132 to His-168, Ser-240 to Thr-276, Ala-277 to His-314, Arg-316 to Val-353, and Asp-396 to Asn-433.

Oligomeric complex that consists of at least the alpha, beta, beta', gamma, delta, epsilon and zeta subunits.

Its subcellular location is the cytoplasm. The protein localises to the golgi apparatus membrane. The protein resides in the cytoplasmic vesicle. It is found in the COPI-coated vesicle membrane. The coatomer is a cytosolic protein complex that binds to dilysine motifs and reversibly associates with Golgi non-clathrin-coated vesicles, which further mediate biosynthetic protein transport from the ER, via the Golgi up to the trans Golgi network. Coatomer complex is required for budding from Golgi membranes, and is essential for the retrograde Golgi-to-ER transport of dilysine-tagged proteins. This Gallus gallus (Chicken) protein is Coatomer subunit beta (COPB1).